The sequence spans 413 residues: Acyltransferase mokF (413 aa).

Arginine 93 contacts monacolin J. Serine 96 serves as the catalytic Acyl-ester intermediate. Monacolin J is bound by residues arginine 193, tyrosine 208, and tyrosine 278. Position 386 (glycine 386) interacts with 2-methylbutanoate.

This sequence belongs to the class-A beta-lactamase family.

It catalyses the reaction monacolin J carboxylate + (S)-2-methylbutanoyl-[2-methylbutanoate polyketide synthase] = lovastatin carboxylate + holo-[2-methylbutanoate polyketide synthase]. It participates in polyketide biosynthesis; lovastatin biosynthesis. In terms of biological role, acyltransferase; part of the gene cluster that mediates the biosynthesis of monakolin K, also known as lovastatin, and which acts as a potent competitive inhibitor of HMG-CoA reductase. Monakolin K biosynthesis is performed in two stages. The first stage is catalyzed by the nonaketide synthase mokA, which belongs to type I polyketide synthases and catalyzes the iterative nine-step formation of the polyketide. This PKS stage is completed by the action of dehydrogenase mokE, which catalyzes the NADPH-dependent reduction of the unsaturated tetra-, penta- and heptaketide intermediates that arise during the mokA-mediated biosynthesis of the nonaketide chain and leads to dihydromonacolin L. Covalently bound dihydromonacolin L is released from mokA by the mokD esterase. Conversion of dihydromonacolin L into monacolin L and then monacolin J is subsequently performed with the participation of molecular oxygen and P450 monoogygenase mokC. Finally, mokF performs the conversion of monacoline J to monacoline K through the addition of the side-chain diketide moiety (2R)-2-methylbutanoate produced by the diketide synthase mokB. The chain is Acyltransferase mokF from Monascus pilosus (Red mold).